The following is a 69-amino-acid chain: Defensin-like protein 166 (69 aa).

The N-terminal stretch at 1–15 is a signal peptide; the sequence is MIIVIIFLVIYFNNQ. Cystine bridges form between Cys19-Cys68, Cys24-Cys44, Cys29-Cys62, and Cys33-Cys64.

The protein belongs to the DEFL family.

It is found in the secreted. The sequence is that of Defensin-like protein 166 from Arabidopsis thaliana (Mouse-ear cress).